A 75-amino-acid chain; its full sequence is Small ribosomal subunit protein bS16 (75 aa).

This sequence belongs to the bacterial ribosomal protein bS16 family.

This is Small ribosomal subunit protein bS16 from Campylobacter jejuni subsp. jejuni serotype O:23/36 (strain 81-176).